The chain runs to 413 residues: Multifunctional CCA protein (413 aa).

Positions 8 and 11 each coordinate ATP. 2 residues coordinate CTP: glycine 8 and arginine 11. Mg(2+) contacts are provided by aspartate 21 and aspartate 23. Residues arginine 91, arginine 137, and arginine 140 each contribute to the ATP site. CTP is bound by residues arginine 91, arginine 137, and arginine 140. The 102-residue stretch at 228 to 329 (TGVHTLMTLS…VKLFDAIDAW (102 aa)) folds into the HD domain.

It belongs to the tRNA nucleotidyltransferase/poly(A) polymerase family. Bacterial CCA-adding enzyme type 1 subfamily. As to quaternary structure, monomer. Can also form homodimers and oligomers. The cofactor is Mg(2+). Requires Ni(2+) as cofactor.

It catalyses the reaction a tRNA precursor + 2 CTP + ATP = a tRNA with a 3' CCA end + 3 diphosphate. It carries out the reaction a tRNA with a 3' CCA end + 2 CTP + ATP = a tRNA with a 3' CCACCA end + 3 diphosphate. Its function is as follows. Catalyzes the addition and repair of the essential 3'-terminal CCA sequence in tRNAs without using a nucleic acid template. Adds these three nucleotides in the order of C, C, and A to the tRNA nucleotide-73, using CTP and ATP as substrates and producing inorganic pyrophosphate. tRNA 3'-terminal CCA addition is required both for tRNA processing and repair. Also involved in tRNA surveillance by mediating tandem CCA addition to generate a CCACCA at the 3' terminus of unstable tRNAs. While stable tRNAs receive only 3'-terminal CCA, unstable tRNAs are marked with CCACCA and rapidly degraded. This chain is Multifunctional CCA protein, found in Salmonella typhi.